A 220-amino-acid polypeptide reads, in one-letter code: MMAYLVFLGPPGAGKGTYAKRLQEITGIPHISTGDIFRDIVKKENDELGKKIKEIMERGELVPDELVNEVVKRRLSEKDCERGFILDGYPRTVAQAEFLDDFLKNQNKELTAAVLFEVPEEVVVQRLTARRICPKCGRIYNLISLPPKEDELCDDCKVKLVQREDDKEETVRHRYKVYLEKTQPVIDYYDKKGILKRVDGTIGIDNVIAEVLKIVGWSDK.

12-17 contacts ATP; sequence GAGKGT. An NMP region spans residues 32 to 62; the sequence is STGDIFRDIVKKENDELGKKIKEIMERGELV. Residues Thr33, Arg38, 60–62, 88–91, and Gln95 each bind AMP; these read ELV and GYPR. An LID region spans residues 129–166; it reads ARRICPKCGRIYNLISLPPKEDELCDDCKVKLVQREDD. ATP is bound at residue Arg130. Zn(2+) is bound by residues Cys133 and Cys136. 139-140 contributes to the ATP binding site; the sequence is IY. Residues Cys153 and Cys156 each coordinate Zn(2+). Arg163 and Arg174 together coordinate AMP. Ile202 is a binding site for ATP.

This sequence belongs to the adenylate kinase family. Monomer.

It localises to the cytoplasm. It catalyses the reaction AMP + ATP = 2 ADP. Its pathway is purine metabolism; AMP biosynthesis via salvage pathway; AMP from ADP: step 1/1. Its function is as follows. Catalyzes the reversible transfer of the terminal phosphate group between ATP and AMP. Plays an important role in cellular energy homeostasis and in adenine nucleotide metabolism. This Thermotoga petrophila (strain ATCC BAA-488 / DSM 13995 / JCM 10881 / RKU-1) protein is Adenylate kinase.